Here is a 607-residue protein sequence, read N- to C-terminus: NAD-dependent malic enzyme 2, mitochondrial (607 aa).

The N-terminal 32 residues, 1–32 (MMWKNIAGLSKAAAAARTHGSRRCFSTAIPGP), are a transit peptide targeting the mitochondrion. Tyrosine 136 (proton donor) is an active-site residue. Arginine 189 is an NAD(+) binding site. Lysine 207 functions as the Proton acceptor in the catalytic mechanism. Positions 278, 279, and 302 each coordinate a divalent metal cation. NAD(+)-binding residues include aspartate 302 and asparagine 449.

The protein belongs to the malic enzymes family. As to quaternary structure, homodimer. Heterodimer of two related subunits in NAD-MEH complex. Interacts with NAD-ME1. It depends on Mg(2+) as a cofactor. Mn(2+) serves as cofactor. As to expression, expressed in leaves, stems, flowers, and roots (at protein level). Present in pollen.

The protein resides in the mitochondrion. It carries out the reaction (S)-malate + NAD(+) = pyruvate + CO2 + NADH. Its activity is regulated as follows. Activated by 2-ketoglutarate, phosphoenolpyruvate (PEP), fructose 1,6-biphosphate (FBP) and coenzyme A (acetyl-CoA and CoA) as homodimer and by oxaloacetate (OAA), 2-ketoglutarate, succinate, fumarate and CoA as heterodimer NAD-MEH. Repressed by succinate and fumarate as homodimer, in the presence of NAD(+) and competitively toward the substrate L-malate. Functionally, involved in the regulation of sugars and amino acids metabolisms during the night period. The sequence is that of NAD-dependent malic enzyme 2, mitochondrial (NAD-ME2) from Arabidopsis thaliana (Mouse-ear cress).